A 500-amino-acid polypeptide reads, in one-letter code: Lycopene beta cyclase, chloroplastic (500 aa).

A chloroplast-targeting transit peptide spans 1–81 (MDTLLKTPNK…ELPMYDPSKG (81 aa)). Residue 86 to 114 (LAVVGGGPAGLAVAQQVSEAGLSVVSIDP) participates in NAD(+) binding.

The protein belongs to the lycopene cyclase family.

The protein localises to the plastid. The protein resides in the chloroplast. It catalyses the reaction a carotenoid psi-end group = a carotenoid beta-end derivative. The protein operates within carotenoid biosynthesis; beta-carotene biosynthesis. It participates in carotenoid biosynthesis; beta-zeacarotene biosynthesis. Catalyzes the double cyclization reaction which converts lycopene to beta-carotene and neurosporene to beta-zeacarotene. In Nicotiana tabacum (Common tobacco), this protein is Lycopene beta cyclase, chloroplastic (LCY1).